The following is a 211-amino-acid chain: Suppressor of RNA silencing p3 (211 aa).

It belongs to the tenuiviruses p3 protein family. Homodimer.

The protein localises to the host cytoplasm. Acts as a suppressor of RNA-mediated gene silencing, also known as post-transcriptional gene silencing (PTGS), presumably through the binding of dsRNA. This chain is Suppressor of RNA silencing p3, found in Avena sativa (Oat).